Consider the following 275-residue polypeptide: Large ribosomal subunit protein uL2 (275 aa).

Positions 220 to 275 (VRGAAMNPRDHPHGGGEGRAPRGMPTPKTKWGKPARGVKTRHNPRTDPFIIRRRTR) are disordered. Residues 227 to 239 (PRDHPHGGGEGRA) are compositionally biased toward basic and acidic residues. Residues 249–262 (KWGKPARGVKTRHN) are compositionally biased toward basic residues.

Belongs to the universal ribosomal protein uL2 family. As to quaternary structure, part of the 50S ribosomal subunit. Forms a bridge to the 30S subunit in the 70S ribosome.

Functionally, one of the primary rRNA binding proteins. Required for association of the 30S and 50S subunits to form the 70S ribosome, for tRNA binding and peptide bond formation. It has been suggested to have peptidyltransferase activity; this is somewhat controversial. Makes several contacts with the 16S rRNA in the 70S ribosome. The chain is Large ribosomal subunit protein uL2 from Roseiflexus sp. (strain RS-1).